A 469-amino-acid polypeptide reads, in one-letter code: ATP-dependent protease ATPase subunit HslU (469 aa).

ATP contacts are provided by residues isoleucine 24 and 66 to 71; that span reads GVGKTE. The segment at 159 to 179 is disordered; that stretch reads LFGSMNQPDEPAEEEVDQELK. Aspartate 282, glutamate 347, and arginine 419 together coordinate ATP.

It belongs to the ClpX chaperone family. HslU subfamily. A double ring-shaped homohexamer of HslV is capped on each side by a ring-shaped HslU homohexamer. The assembly of the HslU/HslV complex is dependent on binding of ATP.

The protein localises to the cytoplasm. In terms of biological role, ATPase subunit of a proteasome-like degradation complex; this subunit has chaperone activity. The binding of ATP and its subsequent hydrolysis by HslU are essential for unfolding of protein substrates subsequently hydrolyzed by HslV. HslU recognizes the N-terminal part of its protein substrates and unfolds these before they are guided to HslV for hydrolysis. The sequence is that of ATP-dependent protease ATPase subunit HslU from Listeria innocua serovar 6a (strain ATCC BAA-680 / CLIP 11262).